Here is a 75-residue protein sequence, read N- to C-terminus: Defensin-like protein (75 aa).

The first 24 residues, 1-24 (MEKKSIAGLCFLFLVLFVAQEVVV), serve as a signal peptide directing secretion. 4 cysteine pairs are disulfide-bonded: cysteine 31–cysteine 75, cysteine 42–cysteine 63, cysteine 48–cysteine 69, and cysteine 52–cysteine 71.

Belongs to the DEFL family.

It localises to the secreted. In terms of biological role, this protein is required for germination. The sequence is that of Defensin-like protein from Vigna unguiculata (Cowpea).